The primary structure comprises 810 residues: Venom phosphodiesterase 2 (810 aa).

A signal peptide spans 1 to 23 (MIQQKVLFISLVAVTLGLGLGLG). In terms of domain architecture, SMB spans 33–77 (QSWSCSKLRCGEKRIANVLCSCSDDCLEKKDCCTDYKSICKGETS). Intrachain disulfides connect Cys-37-Cys-42, Cys-37-Cys-54, Cys-42-Cys-72, Cys-52-Cys-54, Cys-52-Cys-65, Cys-58-Cys-64, Cys-65-Cys-72, Cys-83-Cys-129, and Cys-91-Cys-303. A divalent metal cation is bound by residues Asp-106 and Thr-144. Thr-144 serves as the catalytic AMP-threonine intermediate. Residues Asn-175, Asn-218, and Asn-229 are each glycosylated (N-linked (GlcNAc...) asparagine). Lys-230 provides a ligand contact to AMP. 4 residues coordinate a divalent metal cation: Asp-264, His-268, Asp-311, and His-312. His-268 contacts AMP. 6 disulfides stabilise this stretch: Cys-319/Cys-416, Cys-367/Cys-752, Cys-500/Cys-558, Cys-513/Cys-613, Cys-515/Cys-598, and Cys-721/Cys-731. Asn-364 is a glycosylation site (N-linked (GlcNAc...) asparagine). Residue His-421 coordinates a divalent metal cation. Residues Asn-471, Asn-553, Asn-633, and Asn-704 are each glycosylated (N-linked (GlcNAc...) asparagine).

Belongs to the nucleotide pyrophosphatase/phosphodiesterase family. Monomer cleaved in two subunits; disulfide-linked. Is synthesized as a single-chain protein and is subsequently cleaved to form a two-subunit protein held together with disulfide bonds. It depends on a divalent metal cation as a cofactor. In terms of tissue distribution, expressed by venom gland.

The protein resides in the secreted. The catalysed reaction is ADP + H2O = AMP + phosphate + H(+). Functionally, hydrolyzes ADP with high activity. Shows weak or no activity on 5'-AMP, 5'-GMP, 3'-AMP, ATP, cAMP, and cGMP. Is devoid of monophosphatase and proteinase activities. Dose-dependently inhibits platelet aggregation induced by ADP (IC(50)=0.99 uM) and collagen (IC(50)=1.4 uM). The sequence is that of Venom phosphodiesterase 2 from Crotalus adamanteus (Eastern diamondback rattlesnake).